A 509-amino-acid chain; its full sequence is 2,3-bisphosphoglycerate-independent phosphoglycerate mutase (509 aa).

Aspartate 12 and serine 62 together coordinate Mn(2+). Serine 62 acts as the Phosphoserine intermediate in catalysis. Residues histidine 123, 153 to 154 (RD), arginine 185, arginine 191, 260 to 263 (RPDR), and lysine 333 each bind substrate. Positions 400, 404, 441, 442, and 460 each coordinate Mn(2+).

Belongs to the BPG-independent phosphoglycerate mutase family. Monomer. It depends on Mn(2+) as a cofactor.

The enzyme catalyses (2R)-2-phosphoglycerate = (2R)-3-phosphoglycerate. The protein operates within carbohydrate degradation; glycolysis; pyruvate from D-glyceraldehyde 3-phosphate: step 3/5. Functionally, catalyzes the interconversion of 2-phosphoglycerate and 3-phosphoglycerate. The polypeptide is 2,3-bisphosphoglycerate-independent phosphoglycerate mutase (Clostridium botulinum (strain ATCC 19397 / Type A)).